An 86-amino-acid chain; its full sequence is MATKKAGGGSRNGRDSAGRRLGVKKTDGQYVIPGNIIVRQRGTKIHPGTNVGLGKDHTIFALIEGRVEFLTKRNHKIVNVKGIAST.

The span at methionine 1–arginine 11 shows a compositional bias: gly residues. A disordered region spans residues methionine 1 to lysine 24.

The protein belongs to the bacterial ribosomal protein bL27 family.

This Rickettsia africae (strain ESF-5) protein is Large ribosomal subunit protein bL27.